We begin with the raw amino-acid sequence, 441 residues long: GTPase Der (441 aa).

EngA-type G domains lie at 4 to 169 and 178 to 353; these read SIVA…PPEA and PRIA…QNRN. GTP contacts are provided by residues 10-17, 57-61, 120-123, 184-191, 231-235, and 296-299; these read GRPNVGKS, DTGGI, NKVD, GKPNVGKS, DTAGL, and NKWD. Positions 354–438 constitute a KH-like domain; the sequence is LRISTGVLNE…SLKFFIRERK (85 aa).

This sequence belongs to the TRAFAC class TrmE-Era-EngA-EngB-Septin-like GTPase superfamily. EngA (Der) GTPase family. Associates with the 50S ribosomal subunit.

Its function is as follows. GTPase that plays an essential role in the late steps of ribosome biogenesis. The protein is GTPase Der of Lachnoclostridium phytofermentans (strain ATCC 700394 / DSM 18823 / ISDg) (Clostridium phytofermentans).